We begin with the raw amino-acid sequence, 406 residues long: NADH-quinone oxidoreductase subunit D (406 aa).

The protein belongs to the complex I 49 kDa subunit family. In terms of assembly, NDH-1 is composed of 14 different subunits. Subunits NuoB, C, D, E, F, and G constitute the peripheral sector of the complex.

It is found in the cell inner membrane. It catalyses the reaction a quinone + NADH + 5 H(+)(in) = a quinol + NAD(+) + 4 H(+)(out). NDH-1 shuttles electrons from NADH, via FMN and iron-sulfur (Fe-S) centers, to quinones in the respiratory chain. The immediate electron acceptor for the enzyme in this species is believed to be ubiquinone. Couples the redox reaction to proton translocation (for every two electrons transferred, four hydrogen ions are translocated across the cytoplasmic membrane), and thus conserves the redox energy in a proton gradient. This Leptospira biflexa serovar Patoc (strain Patoc 1 / Ames) protein is NADH-quinone oxidoreductase subunit D.